A 349-amino-acid polypeptide reads, in one-letter code: Phosphoribosylformylglycinamidine cyclo-ligase (349 aa).

This sequence belongs to the AIR synthase family.

It localises to the cytoplasm. The enzyme catalyses 2-formamido-N(1)-(5-O-phospho-beta-D-ribosyl)acetamidine + ATP = 5-amino-1-(5-phospho-beta-D-ribosyl)imidazole + ADP + phosphate + H(+). Its pathway is purine metabolism; IMP biosynthesis via de novo pathway; 5-amino-1-(5-phospho-D-ribosyl)imidazole from N(2)-formyl-N(1)-(5-phospho-D-ribosyl)glycinamide: step 2/2. The polypeptide is Phosphoribosylformylglycinamidine cyclo-ligase (Listeria monocytogenes serotype 4b (strain CLIP80459)).